Consider the following 170-residue polypeptide: uncharacterized protein (170 aa).

This is an uncharacterized protein from Treponema pallidum (strain Nichols).